Here is a 563-residue protein sequence, read N- to C-terminus: MAKATAKNSAKQPKYIFITGGVVSSLGKGITSASLALLLKSRGYKVFMQKLDPYLNVDPGTMSPYQHGEVFVTDDGYETDLDLGHYERFAGVQCSKASSYTSGRIYSSVLSKERAGHYLGGTVQVIPHITNEIKDAFRSAAESGADIILCEIGGVAGDIESLPFLEAARQFRFEVGVENTCFIHLTLVPYLKAAGELKTKPSQHSVAELRNIGIFPDILVCRTEMHIPQEHLDKLALFCNVKPECVIEEKDVKDSVYAVPRELSKQELDLRVLEQLHLSVHPIVHSEWDSLVKKATQPKYECTIALVGKYIAIRDAYKSVHEALQHAGMANNAKVNVECIEAEELEKNPKLIKKADGILIPGGFGSRGVNGKCAAIRYARENKVPLLGICLGMQCCVIEFARDVLGWKDANSTEFDENTTHPVIDLMDEQKNVTEKGGTMRLGAYPCKLAKDSNAAKLYKSEKISERHRHRYEFNYNSEFRKELEKAGLKIAGTSPDGKLVEMVELKNHPYFEACQFHPEFKSRPTDPHPLFTGLVKAALEQKKANGKKPTAPSEKTKKTKTK.

The tract at residues 1 to 278 (MAKATAKNSA…DLRVLEQLHL (278 aa)) is amidoligase domain. Residue S24 coordinates CTP. S24 lines the UTP pocket. 25–30 (SLGKGI) provides a ligand contact to ATP. Y65 lines the L-glutamine pocket. D82 contributes to the ATP binding site. D82 and E151 together coordinate Mg(2+). CTP-binding positions include 158-160 (DIE), 198-203 (KTKPSQ), and K234. UTP is bound by residues 198 to 203 (KTKPSQ) and K234. 250-252 (KDV) is an ATP binding site. Positions 303–545 (TIALVGKYIA…VKAALEQKKA (243 aa)) constitute a Glutamine amidotransferase type-1 domain. G363 lines the L-glutamine pocket. The active-site Nucleophile; for glutamine hydrolysis is C390. L-glutamine contacts are provided by residues 391-394 (LGMQ), E414, and R471. Active-site residues include H518 and E520. The disordered stretch occupies residues 542–563 (QKKANGKKPTAPSEKTKKTKTK).

This sequence belongs to the CTP synthase family. In terms of assembly, homotetramer.

It carries out the reaction UTP + L-glutamine + ATP + H2O = CTP + L-glutamate + ADP + phosphate + 2 H(+). The catalysed reaction is L-glutamine + H2O = L-glutamate + NH4(+). It catalyses the reaction UTP + NH4(+) + ATP = CTP + ADP + phosphate + 2 H(+). It participates in pyrimidine metabolism; CTP biosynthesis via de novo pathway; CTP from UDP: step 2/2. Its activity is regulated as follows. Allosterically activated by GTP, when glutamine is the substrate; GTP has no effect on the reaction when ammonia is the substrate. The allosteric effector GTP functions by stabilizing the protein conformation that binds the tetrahedral intermediate(s) formed during glutamine hydrolysis. Inhibited by the product CTP, via allosteric rather than competitive inhibition. Catalyzes the ATP-dependent amination of UTP to CTP with either L-glutamine or ammonia as the source of nitrogen. Regulates intracellular CTP levels through interactions with the four ribonucleotide triphosphates. The polypeptide is CTP synthase (Fibrobacter succinogenes (strain ATCC 19169 / S85)).